The following is a 191-amino-acid chain: Dephospho-CoA kinase (191 aa).

In terms of domain architecture, DPCK spans 3 to 191; the sequence is AIGITGSYAS…KLIKDLECRV (189 aa). 11–16 contributes to the ATP binding site; that stretch reads ASGKTF.

This sequence belongs to the CoaE family.

The protein localises to the cytoplasm. The catalysed reaction is 3'-dephospho-CoA + ATP = ADP + CoA + H(+). Its pathway is cofactor biosynthesis; coenzyme A biosynthesis; CoA from (R)-pantothenate: step 5/5. Functionally, catalyzes the phosphorylation of the 3'-hydroxyl group of dephosphocoenzyme A to form coenzyme A. This Rickettsia prowazekii (strain Madrid E) protein is Dephospho-CoA kinase.